A 301-amino-acid polypeptide reads, in one-letter code: Sulfate adenylyltransferase subunit 2 (301 aa).

The tract at residues 279–301 (RQGRLIDHDQDGSMEKKKQEGYF) is disordered.

The protein belongs to the PAPS reductase family. CysD subfamily. In terms of assembly, heterodimer composed of CysD, the smaller subunit, and CysN.

The catalysed reaction is sulfate + ATP + H(+) = adenosine 5'-phosphosulfate + diphosphate. The protein operates within sulfur metabolism; hydrogen sulfide biosynthesis; sulfite from sulfate: step 1/3. With CysN forms the ATP sulfurylase (ATPS) that catalyzes the adenylation of sulfate producing adenosine 5'-phosphosulfate (APS) and diphosphate, the first enzymatic step in sulfur assimilation pathway. APS synthesis involves the formation of a high-energy phosphoric-sulfuric acid anhydride bond driven by GTP hydrolysis by CysN coupled to ATP hydrolysis by CysD. This chain is Sulfate adenylyltransferase subunit 2, found in Geotalea uraniireducens (strain Rf4) (Geobacter uraniireducens).